Consider the following 79-residue polypeptide: MSQEILEKVRSIVAEQLSVDAAEVKPESNFQNDLGADSLDTVELVMALEEAFDIEIPDEAAEGIATVGDAVSYIQEKKG.

A Carrier domain is found at 3 to 78 (QEILEKVRSI…DAVSYIQEKK (76 aa)). The residue at position 38 (S38) is an O-(pantetheine 4'-phosphoryl)serine.

This sequence belongs to the acyl carrier protein (ACP) family. Post-translationally, 4'-phosphopantetheine is transferred from CoA to a specific serine of apo-ACP by AcpS. This modification is essential for activity because fatty acids are bound in thioester linkage to the sulfhydryl of the prosthetic group.

The protein localises to the cytoplasm. It functions in the pathway lipid metabolism; fatty acid biosynthesis. Carrier of the growing fatty acid chain in fatty acid biosynthesis. The polypeptide is Acyl carrier protein (Synechococcus sp. (strain RCC307)).